Here is a 248-residue protein sequence, read N- to C-terminus: Aspartate/glutamate leucyltransferase (248 aa).

The protein belongs to the R-transferase family. Bpt subfamily.

Its subcellular location is the cytoplasm. It catalyses the reaction N-terminal L-glutamyl-[protein] + L-leucyl-tRNA(Leu) = N-terminal L-leucyl-L-glutamyl-[protein] + tRNA(Leu) + H(+). It carries out the reaction N-terminal L-aspartyl-[protein] + L-leucyl-tRNA(Leu) = N-terminal L-leucyl-L-aspartyl-[protein] + tRNA(Leu) + H(+). Its function is as follows. Functions in the N-end rule pathway of protein degradation where it conjugates Leu from its aminoacyl-tRNA to the N-termini of proteins containing an N-terminal aspartate or glutamate. This Methylobacillus flagellatus (strain ATCC 51484 / DSM 6875 / VKM B-1610 / KT) protein is Aspartate/glutamate leucyltransferase.